The sequence spans 70 residues: Small integral membrane protein 42 (70 aa).

A helical transmembrane segment spans residues 26 to 46 (LVNVLFFFTPLMTLVTLLILV).

The protein resides in the membrane. The protein is Small integral membrane protein 42 of Homo sapiens (Human).